The sequence spans 523 residues: 2-isopropylmalate synthase (523 aa).

Residues 5-267 (VIIFDTTLRD…HTRINHQEIW (263 aa)) form the Pyruvate carboxyltransferase domain. 4 residues coordinate Mn(2+): Asp-14, His-202, His-204, and Asn-238. Residues 392-523 (RLEYFSVQSG…QNKEHNQETV (132 aa)) form a regulatory domain region.

The protein belongs to the alpha-IPM synthase/homocitrate synthase family. LeuA type 1 subfamily. In terms of assembly, homodimer. The cofactor is Mn(2+).

Its subcellular location is the cytoplasm. The enzyme catalyses 3-methyl-2-oxobutanoate + acetyl-CoA + H2O = (2S)-2-isopropylmalate + CoA + H(+). The protein operates within amino-acid biosynthesis; L-leucine biosynthesis; L-leucine from 3-methyl-2-oxobutanoate: step 1/4. Functionally, catalyzes the condensation of the acetyl group of acetyl-CoA with 3-methyl-2-oxobutanoate (2-ketoisovalerate) to form 3-carboxy-3-hydroxy-4-methylpentanoate (2-isopropylmalate). The polypeptide is 2-isopropylmalate synthase (Cronobacter sakazakii (strain ATCC BAA-894) (Enterobacter sakazakii)).